Reading from the N-terminus, the 295-residue chain is Pyridoxal 5'-phosphate synthase subunit PdxS (295 aa).

Asp25 provides a ligand contact to D-ribose 5-phosphate. Lys82 functions as the Schiff-base intermediate with D-ribose 5-phosphate in the catalytic mechanism. Residue Gly154 coordinates D-ribose 5-phosphate. Arg166 is a binding site for D-glyceraldehyde 3-phosphate. D-ribose 5-phosphate contacts are provided by residues Gly215 and 236–237; that span reads GS.

Belongs to the PdxS/SNZ family. In terms of assembly, in the presence of PdxT, forms a dodecamer of heterodimers.

It catalyses the reaction aldehydo-D-ribose 5-phosphate + D-glyceraldehyde 3-phosphate + L-glutamine = pyridoxal 5'-phosphate + L-glutamate + phosphate + 3 H2O + H(+). Its pathway is cofactor biosynthesis; pyridoxal 5'-phosphate biosynthesis. Catalyzes the formation of pyridoxal 5'-phosphate from ribose 5-phosphate (RBP), glyceraldehyde 3-phosphate (G3P) and ammonia. The ammonia is provided by the PdxT subunit. Can also use ribulose 5-phosphate and dihydroxyacetone phosphate as substrates, resulting from enzyme-catalyzed isomerization of RBP and G3P, respectively. In Actinobacillus pleuropneumoniae serotype 3 (strain JL03), this protein is Pyridoxal 5'-phosphate synthase subunit PdxS.